The chain runs to 272 residues: Large ribosomal subunit protein uL29m (272 aa).

Disordered stretches follow at residues 1-29 (MAAA…PLTQ), 56-87 (KHRG…PRNK), and 227-272 (AAAT…TPRL). A compositionally biased stretch (low complexity) spans 17–29 (SSSTPSPLRPLTQ). Low complexity-rich tracts occupy residues 227 to 238 (AAATEGEQQAAE) and 249 to 259 (PATAATPESAT). Residues 260-272 (IPSSQQQTDTPRL) show a composition bias toward polar residues.

Belongs to the universal ribosomal protein uL29 family. As to quaternary structure, component of the mitochondrial large ribosomal subunit. Mature mitochondrial ribosomes consist of a small (37S) and a large (54S) subunit. The 37S subunit contains at least 33 different proteins and 1 molecule of RNA (15S). The 54S subunit contains at least 45 different proteins and 1 molecule of RNA (21S).

It localises to the mitochondrion. The protein is Large ribosomal subunit protein uL29m (MRPL4) of Chaetomium globosum (strain ATCC 6205 / CBS 148.51 / DSM 1962 / NBRC 6347 / NRRL 1970) (Soil fungus).